The following is a 188-amino-acid chain: Crossover junction endodeoxyribonuclease RuvC (188 aa).

Catalysis depends on residues aspartate 7, glutamate 68, and aspartate 141. Mg(2+) contacts are provided by aspartate 7, glutamate 68, and aspartate 141.

This sequence belongs to the RuvC family. As to quaternary structure, homodimer which binds Holliday junction (HJ) DNA. The HJ becomes 2-fold symmetrical on binding to RuvC with unstacked arms; it has a different conformation from HJ DNA in complex with RuvA. In the full resolvosome a probable DNA-RuvA(4)-RuvB(12)-RuvC(2) complex forms which resolves the HJ. Requires Mg(2+) as cofactor.

The protein resides in the cytoplasm. The catalysed reaction is Endonucleolytic cleavage at a junction such as a reciprocal single-stranded crossover between two homologous DNA duplexes (Holliday junction).. In terms of biological role, the RuvA-RuvB-RuvC complex processes Holliday junction (HJ) DNA during genetic recombination and DNA repair. Endonuclease that resolves HJ intermediates. Cleaves cruciform DNA by making single-stranded nicks across the HJ at symmetrical positions within the homologous arms, yielding a 5'-phosphate and a 3'-hydroxyl group; requires a central core of homology in the junction. The consensus cleavage sequence is 5'-(A/T)TT(C/G)-3'. Cleavage occurs on the 3'-side of the TT dinucleotide at the point of strand exchange. HJ branch migration catalyzed by RuvA-RuvB allows RuvC to scan DNA until it finds its consensus sequence, where it cleaves and resolves the cruciform DNA. This is Crossover junction endodeoxyribonuclease RuvC from Mycobacterium leprae (strain TN).